The primary structure comprises 341 residues: Phosphoribosylformylglycinamidine cyclo-ligase (341 aa).

It belongs to the AIR synthase family.

It localises to the cytoplasm. The catalysed reaction is 2-formamido-N(1)-(5-O-phospho-beta-D-ribosyl)acetamidine + ATP = 5-amino-1-(5-phospho-beta-D-ribosyl)imidazole + ADP + phosphate + H(+). It participates in purine metabolism; IMP biosynthesis via de novo pathway; 5-amino-1-(5-phospho-D-ribosyl)imidazole from N(2)-formyl-N(1)-(5-phospho-D-ribosyl)glycinamide: step 2/2. The protein is Phosphoribosylformylglycinamidine cyclo-ligase of Xanthomonas axonopodis pv. citri (strain 306).